Here is a 561-residue protein sequence, read N- to C-terminus: MSQEFDYIIIGAGSAGNVLATRLTEDADVSVLLLEAGGPDYRFDFRTQMPAALAFPLQGRRYNWAYETDPEPYMNNRRMECGRGKGLGGSSLINGMCYIRGNALDFDGWAKEPGLEDWSYLDCLPYFRKAETRDIGPNDYHGGDGPVSVTTPKAGNNPLFHAMVEAGVQAGYPRTDDLNGYQQEGFGPMDRTVTPEGRRAATGRGYLDQARGRPNLTIVTHALSDRILFSGKRAIGVSYLVGNGDNPATAHARREVLVCSGAIASPQLLQRSGVGPAALLRDLDIPAVHDLPGVGANLQDHLELYLQYACKQPVSIYPATKWWNQPAIGAQWLFLGKGLGASNQFEAGGFIRTREAFEWPNIQFHFLPVAINYNGSKGVQEHGFQAHMGSMRSPSRGRIHLKSRDPRQHPSILFNYMSHEQDWQEFRDGIRLTREIMNQPALDPYRGRELSPGVNVQSDAELDEFIRNHAETAFHPSCSCKMGSDDMAVVDGQGRVHGMEGLRVVDASIMPLIITGNLNATTIMMAEKIADRIRGRQPLPRSTAKYYVAGDAPVRGNPVRA.

Asp-6–Glu-35 serves as a coordination point for FAD. His-475 acts as the Proton acceptor in catalysis.

This sequence belongs to the GMC oxidoreductase family. FAD is required as a cofactor.

It catalyses the reaction choline + A = betaine aldehyde + AH2. It carries out the reaction betaine aldehyde + NAD(+) + H2O = glycine betaine + NADH + 2 H(+). Its pathway is amine and polyamine biosynthesis; betaine biosynthesis via choline pathway; betaine aldehyde from choline (cytochrome c reductase route): step 1/1. Its function is as follows. Involved in the biosynthesis of the osmoprotectant glycine betaine. Catalyzes the oxidation of choline to betaine aldehyde and betaine aldehyde to glycine betaine at the same rate. This Pseudomonas aeruginosa (strain UCBPP-PA14) protein is Oxygen-dependent choline dehydrogenase.